A 408-amino-acid chain; its full sequence is Solute carrier family 35 member F1 (408 aa).

A disordered region spans residues 1-21; the sequence is MIPPEQPQQQLQPPSPAPPNH. The next 10 membrane-spanning stretches (helical) occupy residues 60 to 80, 94 to 114, 129 to 147, 158 to 178, 186 to 206, 221 to 241, 247 to 267, 284 to 304, 311 to 331, and 335 to 355; these read MLIS…IGLT, VFQS…TLAV, WWKY…YLVV, IQLL…FFLL, FIGI…DVLV, LLVL…EYII, VEFL…QLAI, LLYV…PVVI, SVNL…LFLF, and FSGL…LYSS.

This sequence belongs to the SLC35F solute transporter family.

Its subcellular location is the cytoplasmic vesicle. It localises to the secretory vesicle. The protein localises to the synaptic vesicle membrane. Functionally, putative solute transporter. The sequence is that of Solute carrier family 35 member F1 (SLC35F1) from Homo sapiens (Human).